The chain runs to 255 residues: uncharacterized protein (255 aa).

The first 18 residues, 1–18, serve as a signal peptide directing secretion; that stretch reads MRILIILSIILCSLFTKA.

The protein belongs to the MlaA family.

This is an uncharacterized protein from Rickettsia bellii (strain RML369-C).